Here is a 393-residue protein sequence, read N- to C-terminus: MGQLLSHPLTEKTIEYNEYKNNQASTGIVPRFYNCVGSMQGYRLTQEDAHLIRNENSVVYVRFFNPFIDKYETLSLNVFAVFDGHGGDDCSKFLSGGRHHRDGNGSSNGNGEPNAGLIKWIAYSFENHHYTSTTNNDSSKFKRSFNTLEGLVSQIFKDAFILQDEELYRHFANSSCGSTAVVACIINEESLYVANCGDSRCILSSKSNGIKTMSFDHKPQHIGELIRINDNGGTVSLGRVGGVLALSRAFSDFQFKRGVTYPHRRTKLTNITQNLTYGTPPQEAQVTVEPDVLMHKIDYSKDEFLVLACDGIWDIYNNKQLIHFIKYHLVSGTKLDTIITKLLDHGIAQANSNTGVGFDNMTAIIVVLNRKGETLQDWFNKMKTRLERERGLV.

A PPM-type phosphatase domain is found at 33–368 (YNCVGSMQGY…DNMTAIIVVL (336 aa)). The Mn(2+) site is built by Asp83, Gly84, Asp310, and Asp359.

Belongs to the PP2C family. The cofactor is Mg(2+). It depends on Mn(2+) as a cofactor.

The catalysed reaction is O-phospho-L-seryl-[protein] + H2O = L-seryl-[protein] + phosphate. The enzyme catalyses O-phospho-L-threonyl-[protein] + H2O = L-threonyl-[protein] + phosphate. In Saccharomyces cerevisiae (strain ATCC 204508 / S288c) (Baker's yeast), this protein is Protein phosphatase 2C homolog 4 (PTC4).